A 357-amino-acid polypeptide reads, in one-letter code: 3-dehydroquinate synthase (357 aa).

Residues Gly99–Asp103, Thr123–Thr124, Lys135, Lys144, and Phe162–Thr165 contribute to the NAD(+) site. Zn(2+) is bound by residues Glu177, His247, and His261.

It belongs to the sugar phosphate cyclases superfamily. Dehydroquinate synthase family. Requires Co(2+) as cofactor. Zn(2+) is required as a cofactor. The cofactor is NAD(+).

It localises to the cytoplasm. The catalysed reaction is 7-phospho-2-dehydro-3-deoxy-D-arabino-heptonate = 3-dehydroquinate + phosphate. Its pathway is metabolic intermediate biosynthesis; chorismate biosynthesis; chorismate from D-erythrose 4-phosphate and phosphoenolpyruvate: step 2/7. In terms of biological role, catalyzes the conversion of 3-deoxy-D-arabino-heptulosonate 7-phosphate (DAHP) to dehydroquinate (DHQ). The polypeptide is 3-dehydroquinate synthase (Macrococcus caseolyticus (strain JCSC5402) (Macrococcoides caseolyticum)).